Consider the following 372-residue polypeptide: Queuine tRNA-ribosyltransferase (372 aa).

Catalysis depends on aspartate 89, which acts as the Proton acceptor. Residues aspartate 89–phenylalanine 93, aspartate 161, and glycine 232 contribute to the substrate site. Positions glycine 262–serine 268 are RNA binding. Aspartate 281 functions as the Nucleophile in the catalytic mechanism. An RNA binding; important for wobble base 34 recognition region spans residues threonine 286 to arginine 290. Zn(2+) is bound by residues cysteine 319, cysteine 321, cysteine 324, and histidine 351.

Belongs to the queuine tRNA-ribosyltransferase family. In terms of assembly, homodimer. Within each dimer, one monomer is responsible for RNA recognition and catalysis, while the other monomer binds to the replacement base PreQ1. The cofactor is Zn(2+).

The enzyme catalyses 7-aminomethyl-7-carbaguanine + guanosine(34) in tRNA = 7-aminomethyl-7-carbaguanosine(34) in tRNA + guanine. The protein operates within tRNA modification; tRNA-queuosine biosynthesis. Its function is as follows. Catalyzes the base-exchange of a guanine (G) residue with the queuine precursor 7-aminomethyl-7-deazaguanine (PreQ1) at position 34 (anticodon wobble position) in tRNAs with GU(N) anticodons (tRNA-Asp, -Asn, -His and -Tyr). Catalysis occurs through a double-displacement mechanism. The nucleophile active site attacks the C1' of nucleotide 34 to detach the guanine base from the RNA, forming a covalent enzyme-RNA intermediate. The proton acceptor active site deprotonates the incoming PreQ1, allowing a nucleophilic attack on the C1' of the ribose to form the product. After dissociation, two additional enzymatic reactions on the tRNA convert PreQ1 to queuine (Q), resulting in the hypermodified nucleoside queuosine (7-(((4,5-cis-dihydroxy-2-cyclopenten-1-yl)amino)methyl)-7-deazaguanosine). The protein is Queuine tRNA-ribosyltransferase of Chlamydia pneumoniae (Chlamydophila pneumoniae).